The chain runs to 240 residues: 31 kDa outer-membrane immunogenic protein (240 aa).

The first 19 residues, 1–19 (MKSVILASIAAMFATSAMA), serve as a signal peptide directing secretion. Residues 48–83 (NAGYAGGKFKHPFSSFDKEDNEQVSGSLDVTAGGFV) are epitope recognized by the monoclonal antibody A59/10F09/G10.

The protein belongs to the Omp25/RopB family. Oligomeric.

It localises to the cell outer membrane. In terms of biological role, major outer membrane protein associated with peptidoglycans. May function as a porin. This is 31 kDa outer-membrane immunogenic protein (omp31) from Brucella melitensis biotype 1 (strain ATCC 23456 / CCUG 17765 / NCTC 10094 / 16M).